We begin with the raw amino-acid sequence, 340 residues long: Glyceraldehyde-3-phosphate dehydrogenase (340 aa).

NAD(+)-binding positions include 13-14 and G112; that span reads TI. 141–143 is a D-glyceraldehyde 3-phosphate binding site; that stretch reads SCN. C142 functions as the Nucleophile in the catalytic mechanism. R170 is a binding site for NAD(+). Residue 196–197 coordinates D-glyceraldehyde 3-phosphate; the sequence is HG. Q302 contacts NAD(+).

This sequence belongs to the glyceraldehyde-3-phosphate dehydrogenase family. Homotetramer.

The protein localises to the cytoplasm. It carries out the reaction D-glyceraldehyde 3-phosphate + phosphate + NADP(+) = (2R)-3-phospho-glyceroyl phosphate + NADPH + H(+). The catalysed reaction is D-glyceraldehyde 3-phosphate + phosphate + NAD(+) = (2R)-3-phospho-glyceroyl phosphate + NADH + H(+). Its pathway is carbohydrate degradation; glycolysis; pyruvate from D-glyceraldehyde 3-phosphate: step 1/5. The polypeptide is Glyceraldehyde-3-phosphate dehydrogenase (gap) (Archaeoglobus fulgidus (strain ATCC 49558 / DSM 4304 / JCM 9628 / NBRC 100126 / VC-16)).